We begin with the raw amino-acid sequence, 173 residues long: Crossover junction endodeoxyribonuclease RuvC (173 aa).

Residues aspartate 8, glutamate 67, and aspartate 139 contribute to the active site. The Mg(2+) site is built by aspartate 8, glutamate 67, and aspartate 139.

It belongs to the RuvC family. Homodimer which binds Holliday junction (HJ) DNA. The HJ becomes 2-fold symmetrical on binding to RuvC with unstacked arms; it has a different conformation from HJ DNA in complex with RuvA. In the full resolvosome a probable DNA-RuvA(4)-RuvB(12)-RuvC(2) complex forms which resolves the HJ. The cofactor is Mg(2+).

It localises to the cytoplasm. The enzyme catalyses Endonucleolytic cleavage at a junction such as a reciprocal single-stranded crossover between two homologous DNA duplexes (Holliday junction).. The RuvA-RuvB-RuvC complex processes Holliday junction (HJ) DNA during genetic recombination and DNA repair. Endonuclease that resolves HJ intermediates. Cleaves cruciform DNA by making single-stranded nicks across the HJ at symmetrical positions within the homologous arms, yielding a 5'-phosphate and a 3'-hydroxyl group; requires a central core of homology in the junction. The consensus cleavage sequence is 5'-(A/T)TT(C/G)-3'. Cleavage occurs on the 3'-side of the TT dinucleotide at the point of strand exchange. HJ branch migration catalyzed by RuvA-RuvB allows RuvC to scan DNA until it finds its consensus sequence, where it cleaves and resolves the cruciform DNA. The chain is Crossover junction endodeoxyribonuclease RuvC from Shewanella frigidimarina (strain NCIMB 400).